Reading from the N-terminus, the 351-residue chain is Nicotinate-nucleotide--dimethylbenzimidazole phosphoribosyltransferase (351 aa).

Catalysis depends on E313, which acts as the Proton acceptor.

Belongs to the CobT family.

It carries out the reaction 5,6-dimethylbenzimidazole + nicotinate beta-D-ribonucleotide = alpha-ribazole 5'-phosphate + nicotinate + H(+). It participates in nucleoside biosynthesis; alpha-ribazole biosynthesis; alpha-ribazole from 5,6-dimethylbenzimidazole: step 1/2. Catalyzes the synthesis of alpha-ribazole-5'-phosphate from nicotinate mononucleotide (NAMN) and 5,6-dimethylbenzimidazole (DMB). This chain is Nicotinate-nucleotide--dimethylbenzimidazole phosphoribosyltransferase, found in Mycobacterium leprae (strain Br4923).